We begin with the raw amino-acid sequence, 689 residues long: Bifunctional protein GAL10 (689 aa).

Residues 1-345 form a galactowaldenase region; that stretch reads MSYILVTGGA…TTKNPFGFQI (345 aa). 3 to 34 is an NAD(+) binding site; the sequence is YILVTGGAGYIGSHTVVELVNNGYNVVVVDNL. Residues 346-689 are mutarotase; it reads NNYSWTKFDS…SYTIYRFENF (344 aa). Residue His-534 is the For mutarotase activity of the active site.

The protein in the N-terminal section; belongs to the NAD(P)-dependent epimerase/dehydratase family. This sequence in the C-terminal section; belongs to the aldose epimerase family. It depends on NAD(+) as a cofactor.

It catalyses the reaction UDP-alpha-D-glucose = UDP-alpha-D-galactose. The catalysed reaction is alpha-D-glucose = beta-D-glucose. Its pathway is carbohydrate metabolism; galactose metabolism. It functions in the pathway carbohydrate metabolism; hexose metabolism. In terms of biological role, mutarotase converts alpha-aldose to the beta-anomer. It is active on D-glucose, L-arabinose, D-xylose, D-galactose, maltose and lactose. The protein is Bifunctional protein GAL10 (GAL10) of Pachysolen tannophilus (Yeast).